The primary structure comprises 540 residues: Chaperonin GroEL (540 aa).

ATP is bound by residues 29–32 (TLGP), 86–90 (DGTTT), Gly-413, 476–478 (NAA), and Asp-492.

The protein belongs to the chaperonin (HSP60) family. As to quaternary structure, forms a cylinder of 14 subunits composed of two heptameric rings stacked back-to-back. Interacts with the co-chaperonin GroES.

It localises to the cytoplasm. It carries out the reaction ATP + H2O + a folded polypeptide = ADP + phosphate + an unfolded polypeptide.. Together with its co-chaperonin GroES, plays an essential role in assisting protein folding. The GroEL-GroES system forms a nano-cage that allows encapsulation of the non-native substrate proteins and provides a physical environment optimized to promote and accelerate protein folding. In Streptococcus pneumoniae (strain ATCC 700669 / Spain 23F-1), this protein is Chaperonin GroEL.